We begin with the raw amino-acid sequence, 176 residues long: Small ribosomal subunit protein bS6 (176 aa).

The segment at 97 to 176 (DQYTPNDSPP…VEPVDTTSEE (80 aa)) is disordered. The segment covering 140 to 160 (AVETVEPPAEPAEPVEAVETV) has biased composition (low complexity). Over residues 161–176 (DTTEETVEPVDTTSEE) the composition is skewed to acidic residues.

It belongs to the bacterial ribosomal protein bS6 family.

Binds together with bS18 to 16S ribosomal RNA. The sequence is that of Small ribosomal subunit protein bS6 from Gloeothece citriformis (strain PCC 7424) (Cyanothece sp. (strain PCC 7424)).